The following is a 299-amino-acid chain: Coenzyme PQQ synthesis protein B (299 aa).

Belongs to the PqqB family.

Its pathway is cofactor biosynthesis; pyrroloquinoline quinone biosynthesis. May be involved in the transport of PQQ or its precursor to the periplasm. In Methylobacterium radiotolerans (strain ATCC 27329 / DSM 1819 / JCM 2831 / NBRC 15690 / NCIMB 10815 / 0-1), this protein is Coenzyme PQQ synthesis protein B.